The sequence spans 761 residues: Elongation factor G, mitochondrial (761 aa).

The N-terminal 42 residues, 1–42, are a transit peptide targeting the mitochondrion; sequence MSVQKMMWVPRKMVGGRIPFFTCSKVFSGFSRRSFHESPLAR. One can recognise a tr-type G domain in the interval 68 to 349; that stretch reads NKLRNIGISA…AIVDYLPNPS (282 aa). GTP is bound by residues 77 to 84, 148 to 152, and 202 to 205; these read AHIDSGKT, DTPGH, and NKMD.

It belongs to the TRAFAC class translation factor GTPase superfamily. Classic translation factor GTPase family. EF-G/EF-2 subfamily. Post-translationally, the precursor is processed in two steps involving mitochondrial intermediate peptidase (MIP) and mitochondrial processing peptidase (MPP).

The protein localises to the mitochondrion. It participates in protein biosynthesis; polypeptide chain elongation. In terms of biological role, mitochondrial GTPase that catalyzes the GTP-dependent ribosomal translocation step during translation elongation. During this step, the ribosome changes from the pre-translocational (PRE) to the post-translocational (POST) state as the newly formed A-site-bound peptidyl-tRNA and P-site-bound deacylated tRNA move to the P and E sites, respectively. Catalyzes the coordinated movement of the two tRNA molecules, the mRNA and conformational changes in the ribosome. The sequence is that of Elongation factor G, mitochondrial from Saccharomyces cerevisiae (strain ATCC 204508 / S288c) (Baker's yeast).